Here is a 418-residue protein sequence, read N- to C-terminus: Sterigmatocystin 8-O-methyltransferase (418 aa).

A propeptide spanning residues 1–41 (MALPSKAALVGLANTLSEQVKRYLATAGETKSPEDHKLCIE) is cleaved from the precursor. 170–176 (MRSGASF) provides a ligand contact to substrate. The tract at residues 206–225 (LFDYYSTVDEVRGRRFDLGM) is substrate binding. Residues 254 to 255 (GG), aspartate 277, 297 to 298 (DI), and arginine 313 each bind S-adenosyl-L-methionine. Histidine 317 acts as the Proton acceptor in catalysis.

It belongs to the class I-like SAM-binding methyltransferase superfamily. Cation-independent O-methyltransferase family. COMT subfamily.

Its subcellular location is the cytoplasm. It localises to the vacuole. The enzyme catalyses sterigmatocystin + S-adenosyl-L-methionine = 8-O-methylsterigmatocystin + S-adenosyl-L-homocysteine + H(+). The catalysed reaction is dihydrosterigmatocystin + S-adenosyl-L-methionine = 8-O-methyldihydrosterigmatocystin + S-adenosyl-L-homocysteine + H(+). Its pathway is mycotoxin biosynthesis; aflatoxin biosynthesis. In terms of biological role, sterigmatocystin 8-O-methyltransferase; part of the gene cluster that mediates the biosynthesis of aflatoxins, a group of polyketide-derived furanocoumarins, and part of the most toxic and carcinogenic compounds among the known mycotoxins. The four major aflatoxins produced by A.parasiticus are aflatoxin B1 (AFB1), aflatoxin B2 (AFB2), aflatoxin G1 (AFG1) and aflatoxin G2 (AFG2). Within the aflatoxin pathway, the O-methyltransferase aflP uses both sterigmatocystin (ST) and dihydrosterigmatocystin (DHST) as substrates to yield O-methylsterigmatocystin (OMST) and dihydro-O-methylsterigmatocystin (DHOMST), respectively. The biosynthesis of aflatoxins begins with the norsolorinic acid synthase aflC that combines a hexanoyl starter unit produced by the fatty acid synthase aflA/aflB and 7 malonyl-CoA extender units to synthesize the precursor NOR. The second step is the conversion of NOR to averantin and requires the norsolorinic acid ketoreductase aflD, which catalyzes the dehydration of norsolorinic acid to form (1'S)-averantin. The norsolorinic acid reductases aflE and aflF may also play a role in the conversion of NOR to AVN. The cytochrome P450 monooxygenase aflG then catalyzes the hydroxylation of AVN to 5'hydroxyaverantin (HAVN). The next step is performed by the 5'-hydroxyaverantin dehydrogenase aflH that transforms HAVN to 5'-oxoaverantin (OAVN) which is further converted to averufin (AVF) by aflK that plays a dual role in the pathway, as a 5'-oxoaverantin cyclase that mediates conversion of 5'-oxoaverantin, as well as a versicolorin B synthase in a later step in the pathway. The averufin oxidase aflI catalyzes the conversion of AVF to versiconal hemiacetal acetate (VHA). VHA is then the substrate for the versiconal hemiacetal acetate esterase aflJ to yield versiconal (VAL). Versicolorin B synthase aflK then converts VAL to versicolorin B (VERB) by closing the bisfuran ring of aflatoxin which is required for DNA-binding, thus giving to aflatoxin its activity as a mutagen. Then, the activity of the versicolorin B desaturase aflL leads to versicolorin A (VERA). A branch point starts from VERB since it can also be converted to dihydrodemethylsterigmatocystin (DMDHST), probably also by aflL, VERA being a precursor for aflatoxins B1 and G1, and DMDHST for aflatoxins B2 and G2. Next, the versicolorin reductase aflM and the cytochrome P450 monooxygenase aflN are involved in conversion of VERA to demethylsterigmatocystin (DMST). AflX and aflY seem also involved in this step, through probable aflX-mediated epoxide ring-opening step following versicolorin A oxidation and aflY-mediated Baeyer-Villiger oxidation required for the formation of the xanthone ring. The methyltransferase aflO then leads to the modification of DMST to sterigmatocystin (ST), and of DMDHST to dihydrosterigmatocystin (DHST). Both ST and DHST are then substrates of the O-methyltransferase aflP to yield O-methylsterigmatocystin (OMST) and dihydro-O-methylsterigmatocystin (DHOMST), respectively. Finally OMST is converted to aflatoxins B1 and G1, and DHOMST to aflatoxins B2 and G2, via the action of several enzymes including O-methylsterigmatocystin oxidoreductase aflQ, the cytochrome P450 monooxygenase aflU, but also the NADH-dependent flavin oxidoreductase nadA which is specifically required for the synthesis of AFG1. The chain is Sterigmatocystin 8-O-methyltransferase from Aspergillus parasiticus (strain ATCC 56775 / NRRL 5862 / SRRC 143 / SU-1).